A 91-amino-acid chain; its full sequence is Class I hydrophobin 3 (91 aa).

The first 17 residues, 1-17 (MLFRLFTIPSIALGVLG), serve as a signal peptide directing secretion. Intrachain disulfides connect C31-C70, C35-C61, C36-C53, and C71-C87.

It belongs to the fungal hydrophobin family. Self-assembles to form functional amyloid fibrils called rodlets. Self-assembly into fibrillar rodlets occurs spontaneously at hydrophobic:hydrophilic interfaces and the rodlets further associate laterally to form amphipathic monolayers. In terms of tissue distribution, expressed in conidia.

Its subcellular location is the secreted. It localises to the cell wall. Its function is as follows. Aerial growth, conidiation, and dispersal of filamentous fungi in the environment rely upon a capability of their secreting small amphipathic proteins called hydrophobins (HPBs) with low sequence identity. Class I can self-assemble into an outermost layer of rodlet bundles on aerial cell surfaces, conferring cellular hydrophobicity that supports fungal growth, development and dispersal; whereas Class II form highly ordered films at water-air interfaces through intermolecular interactions but contribute nothing to the rodlet structure. HYD3 is a class I hydrophobin located on the conidial surface that activates specifically the humoral and cellular immunity of Metarhizium acridum's own host insect, Locusta migratoria manilensis (Meyen) but not that of other non-host insects. Improves the resistance of locusts to both specialist and generalist fungal pathogens (wide host range) when topically applied to the cuticle, but has no effect on the fungal resistance of other insects, including Spodoptera frugiperda and Galleria mellonella. The sequence is that of Class I hydrophobin 3 from Metarhizium acridum (strain CQMa 102).